The chain runs to 122 residues: Large ribosomal subunit protein bL12 (122 aa).

This sequence belongs to the bacterial ribosomal protein bL12 family. In terms of assembly, homodimer. Part of the ribosomal stalk of the 50S ribosomal subunit. Forms a multimeric L10(L12)X complex, where L10 forms an elongated spine to which 2 to 4 L12 dimers bind in a sequential fashion. Binds GTP-bound translation factors.

Forms part of the ribosomal stalk which helps the ribosome interact with GTP-bound translation factors. Is thus essential for accurate translation. This is Large ribosomal subunit protein bL12 from Mycoplasma capricolum subsp. capricolum (strain California kid / ATCC 27343 / NCTC 10154).